The sequence spans 509 residues: Methionine--tRNA ligase (509 aa).

The 'HIGH' region signature appears at 12-22; that stretch reads YYPSGDLHLGH. A 'KMSKS' region motif is present at residues 302–306; sequence KMSKS. K305 is an ATP binding site.

Belongs to the class-I aminoacyl-tRNA synthetase family. MetG type 2B subfamily. In terms of assembly, monomer.

It is found in the cytoplasm. The catalysed reaction is tRNA(Met) + L-methionine + ATP = L-methionyl-tRNA(Met) + AMP + diphosphate. Is required not only for elongation of protein synthesis but also for the initiation of all mRNA translation through initiator tRNA(fMet) aminoacylation. The chain is Methionine--tRNA ligase (metG) from Mycoplasmopsis pulmonis (strain UAB CTIP) (Mycoplasma pulmonis).